The following is a 626-amino-acid chain: Hormonally up-regulated neu tumor-associated kinase homolog B (626 aa).

ATP contacts are provided by residues 1–2 and Lys17; that span reads KV. In terms of domain architecture, Protein kinase spans 1 to 246; it reads KVREGLHVGT…IQQALANRWL (246 aa). The active-site Proton acceptor is Asp112. The span at 336–357 shows a compositional bias: basic and acidic residues; that stretch reads KYKMNKNSYEERRSKDLEKRGE. Disordered stretches follow at residues 336–407, 477–574, and 590–615; these read KYKM…ESFG, VNRE…RSRG, and QVVS…PGYA. Residues 374–390 show a composition bias toward polar residues; sequence SHRQSTCLTPQGHSSSK. Basic and acidic residues predominate over residues 392–405; sequence PIKERRSSKSERES. Positions 518 to 532 are enriched in polar residues; that stretch reads DNTSPLKGHSNQASF. Residues 539 to 555 show a composition bias toward low complexity; that stretch reads SPSSPESMSPTSPHSPS. The span at 556 to 566 shows a compositional bias: polar residues; that stretch reads CNNNISGNLGS.

This sequence belongs to the protein kinase superfamily. CAMK Ser/Thr protein kinase family. SNF1 subfamily. In the egg, expressed predominantly in the animal hemisphere. This pattern of expression persists throughout the cleavage and blastula stages. At the gastrula stage, expression is restricted to the ectoderm. In later-stage embryos, expressed over the entire embryonic surface including the open neural plate at stage 15 and the neural tube at stage 22. In tadpoles, strongly expressed in the neural tube, motor neurons, brain regions and sensory organs (otic vesicle and eye). Also expressed in the perisomitic mesoderm, brachial arches and embryonic epidermis of tadpoles.

It carries out the reaction L-seryl-[protein] + ATP = O-phospho-L-seryl-[protein] + ADP + H(+). The enzyme catalyses L-threonyl-[protein] + ATP = O-phospho-L-threonyl-[protein] + ADP + H(+). This Xenopus laevis (African clawed frog) protein is Hormonally up-regulated neu tumor-associated kinase homolog B (hunk-b).